A 369-amino-acid chain; its full sequence is Histidinol-phosphate aminotransferase (369 aa).

At K222 the chain carries N6-(pyridoxal phosphate)lysine.

This sequence belongs to the class-II pyridoxal-phosphate-dependent aminotransferase family. Histidinol-phosphate aminotransferase subfamily. In terms of assembly, homodimer. Pyridoxal 5'-phosphate serves as cofactor.

It catalyses the reaction L-histidinol phosphate + 2-oxoglutarate = 3-(imidazol-4-yl)-2-oxopropyl phosphate + L-glutamate. The protein operates within amino-acid biosynthesis; L-histidine biosynthesis; L-histidine from 5-phospho-alpha-D-ribose 1-diphosphate: step 7/9. This is Histidinol-phosphate aminotransferase from Halalkalibacterium halodurans (strain ATCC BAA-125 / DSM 18197 / FERM 7344 / JCM 9153 / C-125) (Bacillus halodurans).